The following is a 315-amino-acid chain: Eukaryotic translation initiation factor 2 subunit 1 (315 aa).

Positions 17-88 (EDVVMVNVRS…EKGYIDLSKR (72 aa)) constitute an S1 motif domain. A Phosphoserine; by HRI modification is found at Ser-49. At Ser-52 the chain carries Phosphoserine. The residue at position 141 (Lys-141) is an N6-acetyllysine. Position 158 is a phosphoserine (Ser-158). 2 positions are modified to phosphothreonine: Thr-279 and Thr-281. Residues 293-315 (LERENAEVDGDDDAEEMEAKAED) are disordered. Over residues 299 to 308 (EVDGDDDAEE) the composition is skewed to acidic residues.

It belongs to the eIF-2-alpha family. In terms of assembly, eukaryotic translation initiation factor 2 eIF2 is a heterotrimeric complex composed of an alpha (EIF2S1), a beta (EIF2S2) and a gamma (EIF2S3) chain. eIF2 is member of the 43S pre-initiation complex (43S PIC). eIF2 forms a complex with at least CELF1/CUGBP1, CALR, CALR3, EIF2S1, EIF2S2, HSP90B1 and HSPA5. Interaction with METAP2 protects EIF2S1 from inhibitory phosphorylation. Interacts with ABCF1. Associates with ribosomes. Interacts with DDX3X in an RNA-independent manner. Post-translationally, phosphorylation at Ser-49 and Ser-52 stabilizes the eIF-2/GDP/eIF2B complex and prevents GDP/GTP exchange reaction, thus impairing the recycling of eIF-2 between successive rounds of initiation and leading to global inhibition of translation, while concomitantly initiating the preferential translation of integrated stress response (ISR)-specific mRNAs. Substrate for at least 4 kinases: EIF2AK1/HRI, EIF2AK2/PKR, EIF2AK3/PERK and EIF2AK4/GCN2. Phosphorylation on Ser-52 by the EIF2AK4/GCN2 protein kinase occurs in response to amino acid starvation and UV irradiation. Phosphorylation at Ser-52 by the EIF2AK3/PERK protein kinase occurs in response to the unfolded protein response. Phosphorylation at Ser-52 by EIF2AK1/HRI in response to mitochondrial damage promotes relocalization to the mitochondrial surface.

It localises to the cytoplasm. Its subcellular location is the stress granule. It is found in the cytosol. The protein localises to the mitochondrion. Activity is regulated by phosphorylation at Ser-49 and Ser-52, which stabilizes the eIF2/GDP/eIF2B complex and prevents the eIF2B-mediated exchange of GDP for GTP, thereby preventing the formation of the 43S pre-initiation complex (43S PIC). This results in the global attenuation of 5' cap-dependent protein synthesis and concomitant translation of ISR-specific mRNAs that contain a short upstream open reading frame (uORF) in their 5' UTR, such as ATF4, ATF5, DDIT3/CHOP and PPP1R15A/GADD34. Functionally, member of the eIF2 complex that functions in the early steps of protein synthesis by forming a ternary complex with GTP and initiator tRNA. This complex binds to a 40S ribosomal subunit, followed by mRNA binding to form a 43S pre-initiation complex. Junction of the 60S ribosomal subunit to form the 80S initiation complex is preceded by hydrolysis of the GTP bound to eIF2 and release of an eIF2-GDP binary complex. In order for eIF2 to recycle and catalyze another round of initiation, the GDP bound to eIF2 must exchange with GTP by way of a reaction catalyzed by eIF2B. EIF2S1/eIF2-alpha is a key component of the integrated stress response (ISR), required for adaptation to various stress: phosphorylation by metabolic-stress sensing protein kinases (EIF2AK1/HRI, EIF2AK2/PKR, EIF2AK3/PERK and EIF2AK4/GCN2) in response to stress converts EIF2S1/eIF2-alpha in a global protein synthesis inhibitor, leading to a attenuation of cap-dependent translation, while concomitantly initiating the preferential translation of ISR-specific mRNAs, such as the transcriptional activators ATF4 and QRICH1, and hence allowing ATF4- and QRICH1-mediated reprogramming. EIF2S1/eIF2-alpha also acts as an activator of mitophagy in response to mitochondrial damage: phosphorylation by EIF2AK1/HRI promotes relocalization to the mitochondrial surface, thereby triggering PRKN-independent mitophagy. This is Eukaryotic translation initiation factor 2 subunit 1 (EIF2S1) from Pongo abelii (Sumatran orangutan).